A 66-amino-acid polypeptide reads, in one-letter code: UPF0337 protein BP1738 (66 aa).

Belongs to the UPF0337 (CsbD) family.

In Bordetella pertussis (strain Tohama I / ATCC BAA-589 / NCTC 13251), this protein is UPF0337 protein BP1738.